The sequence spans 186 residues: Ribosome-recycling factor (186 aa).

Belongs to the RRF family.

The protein localises to the cytoplasm. Its function is as follows. Responsible for the release of ribosomes from messenger RNA at the termination of protein biosynthesis. May increase the efficiency of translation by recycling ribosomes from one round of translation to another. The polypeptide is Ribosome-recycling factor (Chlorobaculum tepidum (strain ATCC 49652 / DSM 12025 / NBRC 103806 / TLS) (Chlorobium tepidum)).